The following is a 190-amino-acid chain: Adenine phosphoribosyltransferase (190 aa).

This sequence belongs to the purine/pyrimidine phosphoribosyltransferase family. In terms of assembly, homodimer.

The protein resides in the cytoplasm. It carries out the reaction AMP + diphosphate = 5-phospho-alpha-D-ribose 1-diphosphate + adenine. Its pathway is purine metabolism; AMP biosynthesis via salvage pathway; AMP from adenine: step 1/1. In terms of biological role, catalyzes a salvage reaction resulting in the formation of AMP, that is energically less costly than de novo synthesis. This is Adenine phosphoribosyltransferase from Cupriavidus necator (strain ATCC 17699 / DSM 428 / KCTC 22496 / NCIMB 10442 / H16 / Stanier 337) (Ralstonia eutropha).